Here is a 387-residue protein sequence, read N- to C-terminus: UDP-N-acetylglucosamine--N-acetylmuramyl-(pentapeptide) pyrophosphoryl-undecaprenol N-acetylglucosamine transferase (387 aa).

Residues 26–28 (TGG), Asn-137, Arg-177, Ser-205, and Gln-306 contribute to the UDP-N-acetyl-alpha-D-glucosamine site.

This sequence belongs to the glycosyltransferase 28 family. MurG subfamily.

It localises to the cell inner membrane. It carries out the reaction di-trans,octa-cis-undecaprenyl diphospho-N-acetyl-alpha-D-muramoyl-L-alanyl-D-glutamyl-meso-2,6-diaminopimeloyl-D-alanyl-D-alanine + UDP-N-acetyl-alpha-D-glucosamine = di-trans,octa-cis-undecaprenyl diphospho-[N-acetyl-alpha-D-glucosaminyl-(1-&gt;4)]-N-acetyl-alpha-D-muramoyl-L-alanyl-D-glutamyl-meso-2,6-diaminopimeloyl-D-alanyl-D-alanine + UDP + H(+). Its pathway is cell wall biogenesis; peptidoglycan biosynthesis. Functionally, cell wall formation. Catalyzes the transfer of a GlcNAc subunit on undecaprenyl-pyrophosphoryl-MurNAc-pentapeptide (lipid intermediate I) to form undecaprenyl-pyrophosphoryl-MurNAc-(pentapeptide)GlcNAc (lipid intermediate II). The sequence is that of UDP-N-acetylglucosamine--N-acetylmuramyl-(pentapeptide) pyrophosphoryl-undecaprenol N-acetylglucosamine transferase from Rhodospirillum rubrum (strain ATCC 11170 / ATH 1.1.1 / DSM 467 / LMG 4362 / NCIMB 8255 / S1).